A 397-amino-acid polypeptide reads, in one-letter code: Iron-sulfur cluster assembly SufBD family protein Rv1462 (397 aa).

The residue at position 2 (T2) is an N-acetylthreonine.

The protein belongs to the iron-sulfur cluster assembly SufBD family.

This chain is Iron-sulfur cluster assembly SufBD family protein Rv1462, found in Mycobacterium tuberculosis (strain ATCC 25618 / H37Rv).